The sequence spans 399 residues: Proteasome-activating nucleotidase (399 aa).

Residues 19 to 60 (ITYLKRRIRQLELQVRMLEADKERLERELSRLRSEMSRLRQP) are a coiled coil. ATP is bound by residues 184-189 (GCGKTL) and histidine 323. The tract at residues 397 to 399 (IYG) is docks into pockets in the proteasome alpha-ring to cause gate opening.

This sequence belongs to the AAA ATPase family. Homohexamer. The hexameric complex has a two-ring architecture resembling a top hat that caps the 20S proteasome core at one or both ends. Upon ATP-binding, the C-terminus of PAN interacts with the alpha-rings of the proteasome core by binding to the intersubunit pockets.

Its subcellular location is the cytoplasm. ATPase which is responsible for recognizing, binding, unfolding and translocation of substrate proteins into the archaeal 20S proteasome core particle. Is essential for opening the gate of the 20S proteasome via an interaction with its C-terminus, thereby allowing substrate entry and access to the site of proteolysis. Thus, the C-termini of the proteasomal ATPase function like a 'key in a lock' to induce gate opening and therefore regulate proteolysis. Unfolding activity requires energy from ATP hydrolysis, whereas ATP binding alone promotes ATPase-20S proteasome association which triggers gate opening, and supports translocation of unfolded substrates. In Pyrococcus horikoshii (strain ATCC 700860 / DSM 12428 / JCM 9974 / NBRC 100139 / OT-3), this protein is Proteasome-activating nucleotidase.